We begin with the raw amino-acid sequence, 87 residues long: Small ribosomal subunit protein bS20 (87 aa).

The protein belongs to the bacterial ribosomal protein bS20 family.

Binds directly to 16S ribosomal RNA. The sequence is that of Small ribosomal subunit protein bS20 from Brachyspira hyodysenteriae (strain ATCC 49526 / WA1).